The primary structure comprises 102 residues: Envelope protein US9 (102 aa).

Over 1–75 (MAGQNTMEGE…KIYHRKKFCY (75 aa)) the chain is Intravirion. The short motif at 14-15 (LL) is the Di-leucine internalization motif element. Residues 41–55 (EKCYYSDSENETADE) form an acidic region. Serine 46 and serine 48 each carry phosphoserine; by host CK2. Residues 76–96 (ITLIIVFVFAMTGAAFALGYI) traverse the membrane as a helical; Signal-anchor for type II membrane protein segment. The Virion surface portion of the chain corresponds to 97-102 (TSQFVG).

Belongs to the alphaherpesvirinae envelope protein US9 family. Phosphorylated on serines within the acidic cluster, possibly by host CK2. Phosphorylation determines whether endocytosed viral US9 traffics to the trans-Golgi network or recycles to the cell membrane.

The protein localises to the virion membrane. It is found in the host Golgi apparatus membrane. Its subcellular location is the host Golgi apparatus. It localises to the host trans-Golgi network. The protein resides in the host cell membrane. Functionally, essential for the anterograde spread of the infection throughout the host nervous system. Together with the gE/gI heterodimer, US9 is involved in the sorting and transport of viral structural components toward axon tips. The protein is Envelope protein US9 of Varicella-zoster virus (strain Dumas) (HHV-3).